We begin with the raw amino-acid sequence, 295 residues long: F-box only protein 8 (295 aa).

The F-box domain occupies 35–80 (TWVARYIPQDLLIEILTRLPPKSVMRFKCVSKFWSSLLSSRYFCNR).

In Arabidopsis thaliana (Mouse-ear cress), this protein is F-box only protein 8 (FBX8).